Reading from the N-terminus, the 126-residue chain is MFS14 protein (126 aa).

A signal peptide (or 24, or 26) is located at residues 1-23; it reads MALEAATAPRALLAACLVLLVLG.

As to expression, enhanced expression in male flowers. Accumulates in the tapetum.

This Zea mays (Maize) protein is MFS14 protein (MFS14).